The following is a 500-amino-acid chain: Probable cytosol aminopeptidase (500 aa).

Mn(2+) is bound by residues Lys264 and Asp269. Residue Lys276 is part of the active site. Asp287, Asp346, and Glu348 together coordinate Mn(2+). Arg350 is a catalytic residue.

This sequence belongs to the peptidase M17 family. Mn(2+) is required as a cofactor.

It localises to the cytoplasm. It carries out the reaction Release of an N-terminal amino acid, Xaa-|-Yaa-, in which Xaa is preferably Leu, but may be other amino acids including Pro although not Arg or Lys, and Yaa may be Pro. Amino acid amides and methyl esters are also readily hydrolyzed, but rates on arylamides are exceedingly low.. The catalysed reaction is Release of an N-terminal amino acid, preferentially leucine, but not glutamic or aspartic acids.. In terms of biological role, presumably involved in the processing and regular turnover of intracellular proteins. Catalyzes the removal of unsubstituted N-terminal amino acids from various peptides. In Afipia carboxidovorans (strain ATCC 49405 / DSM 1227 / KCTC 32145 / OM5) (Oligotropha carboxidovorans), this protein is Probable cytosol aminopeptidase.